The following is a 330-amino-acid chain: D-xylose-binding periplasmic protein (330 aa).

An N-terminal signal peptide occupies residues 1–23; that stretch reads MKIKNILLTLCTSLLLTNVAAHA.

Belongs to the bacterial solute-binding protein 2 family.

It is found in the periplasm. Involved in the high-affinity D-xylose membrane transport system. Binds with high affinity to xylose. The sequence is that of D-xylose-binding periplasmic protein (xylF) from Escherichia coli (strain K12).